A 464-amino-acid polypeptide reads, in one-letter code: Flavin-containing monooxygenase FMO GS-OX-like 7 (464 aa).

18 to 23 (GAGAAG) provides a ligand contact to FAD. 214-219 (GSSVSG) lines the NADP(+) pocket.

Belongs to the FMO family. The cofactor is FAD.

Catalyzes the conversion of methylthioalkyl glucosinolates of any chain length into methylsulfinylalkyl glucosinolates. The polypeptide is Flavin-containing monooxygenase FMO GS-OX-like 7 (Arabidopsis thaliana (Mouse-ear cress)).